The primary structure comprises 237 residues: N-demethylindolmycin N-methyltransferase (237 aa).

This sequence belongs to the methyltransferase superfamily.

It catalyses the reaction N-demethylindolmycin + S-adenosyl-L-methionine = indolmycin + S-adenosyl-L-homocysteine + H(+). Involved in the biosynthesis of the antibiotic indolmycin, an inhibitor of the bacterial tryptophan-tRNA synthetases. Catalyzes the methylation of N-demethylindolmycin to yield indolmycin, with S-adenosylmethionine (AdoMet) acting as the methyl donor. This is N-demethylindolmycin N-methyltransferase from Streptomyces griseus.